Reading from the N-terminus, the 940-residue chain is UvrABC system protein A (940 aa).

31–38 (GLSGSGKS) is a binding site for ATP. The C4-type zinc finger occupies 252–279 (CPHCGYSMQELEPRLFSFNNPAGACGTC). ABC transporter domains follow at residues 309 to 586 (WDQK…PDSL) and 606 to 936 (RDKN…RFLK). 639–646 (GVSGSGKS) is an ATP binding site. The C4-type zinc finger occupies 739-765 (CEACQGDGVIKVEMHFLPDVYVPCDVC).

Belongs to the ABC transporter superfamily. UvrA family. As to quaternary structure, forms a heterotetramer with UvrB during the search for lesions.

The protein localises to the cytoplasm. Its function is as follows. The UvrABC repair system catalyzes the recognition and processing of DNA lesions. UvrA is an ATPase and a DNA-binding protein. A damage recognition complex composed of 2 UvrA and 2 UvrB subunits scans DNA for abnormalities. When the presence of a lesion has been verified by UvrB, the UvrA molecules dissociate. The chain is UvrABC system protein A from Vibrio vulnificus (strain CMCP6).